Consider the following 428-residue polypeptide: Trigger factor (428 aa).

Positions 163–248 (GDTVVIDFEG…LHEIKTKQLP (86 aa)) constitute a PPIase FKBP-type domain.

It belongs to the FKBP-type PPIase family. Tig subfamily.

The protein localises to the cytoplasm. The enzyme catalyses [protein]-peptidylproline (omega=180) = [protein]-peptidylproline (omega=0). In terms of biological role, involved in protein export. Acts as a chaperone by maintaining the newly synthesized protein in an open conformation. Functions as a peptidyl-prolyl cis-trans isomerase. The polypeptide is Trigger factor (Anoxybacillus flavithermus (strain DSM 21510 / WK1)).